A 92-amino-acid polypeptide reads, in one-letter code: Small cysteine and glycine repeat-containing protein 9 (92 aa).

Positions 4-72 are 11 X 2 AA repeats of CG; the sequence is CGCGSCGCSG…CCRRTCSSCG (69 aa).

Belongs to the KRTAP type 28 family.

In the hair cortex, hair keratin intermediate filaments are embedded in an interfilamentous matrix, consisting of hair keratin-associated proteins (KRTAP), which are essential for the formation of a rigid and resistant hair shaft through their extensive disulfide bond cross-linking with abundant cysteine residues of hair keratins. The matrix proteins include the high-sulfur and high-glycine-tyrosine keratins. The chain is Small cysteine and glycine repeat-containing protein 9 from Homo sapiens (Human).